An 88-amino-acid polypeptide reads, in one-letter code: Parvalbumin beta 3 (88 aa).

Ala1 is modified (N-acetylalanine). Positions 31 to 66 constitute an EF-hand domain; that stretch reads KSPEEVKKFFAIIDQDHSGFIEEEELKLFLQTFSAG. The Ca(2+) site is built by Asp44, Asp46, Ser48, Phe50, Glu52, Glu55, and Glu81.

This sequence belongs to the parvalbumin family.

Functionally, in muscle, parvalbumin is thought to be involved in relaxation after contraction. It binds two calcium ions. This is Parvalbumin beta 3 from Merluccius productus (North Pacific hake).